We begin with the raw amino-acid sequence, 260 residues long: Ribosomal RNA small subunit methyltransferase G (260 aa).

S-adenosyl-L-methionine-binding positions include Gly-94, Phe-99, 117–119 (DSS), 145–146 (AE), and Arg-164.

This sequence belongs to the methyltransferase superfamily. RNA methyltransferase RsmG family.

Its subcellular location is the cytoplasm. Functionally, specifically methylates the N7 position of a guanine in 16S rRNA. This Synechococcus sp. (strain JA-3-3Ab) (Cyanobacteria bacterium Yellowstone A-Prime) protein is Ribosomal RNA small subunit methyltransferase G.